Consider the following 153-residue polypeptide: Arginine regulator (153 aa).

This sequence belongs to the ArgR family.

The protein resides in the cytoplasm. The protein operates within amino-acid degradation; L-arginine degradation via ADI pathway. Regulates the transcription of the arc operon, involved in arginine catabolism. The protein is Arginine regulator (argR1) of Lactiplantibacillus plantarum (strain ATCC BAA-793 / NCIMB 8826 / WCFS1) (Lactobacillus plantarum).